The sequence spans 60 residues: Temporin-CG2 (60 aa).

Residues 1-22 (MFTLKKPLLVLFFLATINLSLC) form the signal peptide. The propeptide at 23–43 (EQERNAEEERRDDDERNVEVE) is removed in mature form.

As to expression, expressed by the skin glands.

It localises to the secreted. Its function is as follows. Antimicrobial peptide active against a variety of Gram-positive bacterial strains but not against Gram-negative bacteria. Has weak antifungal activity against a slime mold isolate. Has weak hemolytic activity against human erythrocytes. The protein is Temporin-CG2 of Amolops chunganensis (Chungan torrent frog).